Consider the following 340-residue polypeptide: MILSIESSCDDSSLALTRIEDAKLIAHFKISQEKHHSSYGGVVPEIASRLHAENLPLLLERVKISLNKDFSKIKAIAITNQPGLSVTLIEGLMMAKALSLSLNLPLILEDHLRGHVYSLFINEKQTRMPLSVLLVSGGHSLILEARDYEDIKIVATSLDDSFGESFDKVSKMLDLGYPGGPIVEKLALDYAHPNEPLMFPIPLKNSPNLAFSFSGLKNAVRLEVEKNAHNLNDEVKQKIGYHFQSAAIEHLIQQTKRYFKIKRPKIFGIVGGASQNLALRKAFEDLCAEFDCELVLAPLEFCSDNAAMIGRSSLEAYQKKRFIPLEKADISPRTLLKNFE.

Fe cation contacts are provided by H111 and H115. Residues 134–138 (LVSGG), D167, G180, and N276 contribute to the substrate site. D304 serves as a coordination point for Fe cation.

The protein belongs to the KAE1 / TsaD family. It depends on Fe(2+) as a cofactor.

The protein localises to the cytoplasm. The catalysed reaction is L-threonylcarbamoyladenylate + adenosine(37) in tRNA = N(6)-L-threonylcarbamoyladenosine(37) in tRNA + AMP + H(+). Functionally, required for the formation of a threonylcarbamoyl group on adenosine at position 37 (t(6)A37) in tRNAs that read codons beginning with adenine. Is involved in the transfer of the threonylcarbamoyl moiety of threonylcarbamoyl-AMP (TC-AMP) to the N6 group of A37, together with TsaE and TsaB. TsaD likely plays a direct catalytic role in this reaction. The chain is tRNA N6-adenosine threonylcarbamoyltransferase from Helicobacter pylori (strain J99 / ATCC 700824) (Campylobacter pylori J99).